The sequence spans 420 residues: 4-hydroxy-3-methylbut-2-en-1-yl diphosphate synthase (flavodoxin) (420 aa).

[4Fe-4S] cluster is bound by residues Cys-307, Cys-310, Cys-353, and Glu-360.

The protein belongs to the IspG family. It depends on [4Fe-4S] cluster as a cofactor.

It carries out the reaction (2E)-4-hydroxy-3-methylbut-2-enyl diphosphate + oxidized [flavodoxin] + H2O + 2 H(+) = 2-C-methyl-D-erythritol 2,4-cyclic diphosphate + reduced [flavodoxin]. It functions in the pathway isoprenoid biosynthesis; isopentenyl diphosphate biosynthesis via DXP pathway; isopentenyl diphosphate from 1-deoxy-D-xylulose 5-phosphate: step 5/6. Its function is as follows. Converts 2C-methyl-D-erythritol 2,4-cyclodiphosphate (ME-2,4cPP) into 1-hydroxy-2-methyl-2-(E)-butenyl 4-diphosphate. This Brucella abortus (strain S19) protein is 4-hydroxy-3-methylbut-2-en-1-yl diphosphate synthase (flavodoxin).